A 163-amino-acid polypeptide reads, in one-letter code: Ureidoglycolate lyase 2 (163 aa).

Belongs to the ureidoglycolate lyase family. Homodimer. Ni(2+) serves as cofactor.

The enzyme catalyses (S)-ureidoglycolate = urea + glyoxylate. It functions in the pathway nitrogen metabolism; (S)-allantoin degradation. In terms of biological role, catalyzes the catabolism of the allantoin degradation intermediate (S)-ureidoglycolate, generating urea and glyoxylate. Involved in the utilization of allantoin as nitrogen source. In Rhizobium meliloti (strain 1021) (Ensifer meliloti), this protein is Ureidoglycolate lyase 2.